Reading from the N-terminus, the 85-residue chain is RNA-binding protein Hfq (85 aa).

The region spanning 10–69 (DPFLNILRKEHVPVSIYLVNGIKLQGQIESFDQYVVLLKNTVTQMVYKHAISTVVPARPV) is the Sm domain.

It belongs to the Hfq family. In terms of assembly, homohexamer.

Functionally, RNA chaperone that binds small regulatory RNA (sRNAs) and mRNAs to facilitate mRNA translational regulation in response to envelope stress, environmental stress and changes in metabolite concentrations. Also binds with high specificity to tRNAs. The protein is RNA-binding protein Hfq of Laribacter hongkongensis (strain HLHK9).